A 401-amino-acid polypeptide reads, in one-letter code: Beta-ketoadipyl-CoA thiolase (401 aa).

Cys-90 (acyl-thioester intermediate) is an active-site residue. Catalysis depends on proton acceptor residues His-357 and Cys-387.

This sequence belongs to the thiolase-like superfamily. Thiolase family.

The enzyme catalyses succinyl-CoA + acetyl-CoA = 3-oxoadipyl-CoA + CoA. It participates in aromatic compound metabolism; beta-ketoadipate pathway; acetyl-CoA and succinyl-CoA from 3-oxoadipate: step 2/2. Functionally, catalyzes thiolytic cleavage of beta-ketoadipyl-CoA to succinyl-CoA and acetyl-CoA. The sequence is that of Beta-ketoadipyl-CoA thiolase (pcaF) from Acinetobacter baylyi (strain ATCC 33305 / BD413 / ADP1).